The following is a 548-amino-acid chain: Formyltransferase/hydrolase complex Fhc subunit A (548 aa).

3 residues coordinate Zn(2+): H57, H59, and H227.

Belongs to the metallo-dependent hydrolases superfamily. FwdA/FmdA family. Octaheteromer. Part of the formyltransferase/hydrolase complex fhc; composed of FhcA, FhcB, FhcC and FhcD. Zn(2+) serves as cofactor.

The protein localises to the cytoplasm. It catalyses the reaction N-formylmethanofuran + H2O = methanofuran + formate. The protein operates within one-carbon metabolism; formaldehyde degradation; formate from formaldehyde (H(4)MPT route): step 4/5. Involved in the transformation of 5-formyl tetrahydromethanopterin (5-formyl-H(4)MPT) to methanofuran (MFR) and formate via the formylmethanofuran (formyl-MFR). May be catalyze the hydrolysis of formylmethanofuran (formyl-MFR) to yield formate and MFR. The chain is Formyltransferase/hydrolase complex Fhc subunit A (fhcA) from Methylorubrum extorquens (strain ATCC 14718 / DSM 1338 / JCM 2805 / NCIMB 9133 / AM1) (Methylobacterium extorquens).